The primary structure comprises 344 residues: Phenylalanine--tRNA ligase alpha subunit (344 aa).

Position 256 (E256) interacts with Mg(2+).

This sequence belongs to the class-II aminoacyl-tRNA synthetase family. Phe-tRNA synthetase alpha subunit type 1 subfamily. As to quaternary structure, tetramer of two alpha and two beta subunits. It depends on Mg(2+) as a cofactor.

It is found in the cytoplasm. It catalyses the reaction tRNA(Phe) + L-phenylalanine + ATP = L-phenylalanyl-tRNA(Phe) + AMP + diphosphate + H(+). This Onion yellows phytoplasma (strain OY-M) protein is Phenylalanine--tRNA ligase alpha subunit.